Reading from the N-terminus, the 59-residue chain is Large ribosomal subunit protein uL30 (59 aa).

This sequence belongs to the universal ribosomal protein uL30 family. In terms of assembly, part of the 50S ribosomal subunit.

This is Large ribosomal subunit protein uL30 from Clostridium botulinum (strain 657 / Type Ba4).